Consider the following 184-residue polypeptide: Myeloproliferative leukemia protein (184 aa).

The WSXWS motif motif lies at Trp26–Ser30. Residues Ile44–Leu64 traverse the membrane as a helical segment. Positions Leu80–His88 match the Box 1 motif motif.

It belongs to the type I cytokine receptor family. Type 1 subfamily.

It is found in the membrane. Its function is as follows. Truncated form of the receptor for thrombopoietin. In Mus musculus (Mouse), this protein is Myeloproliferative leukemia protein (V-MPL).